The chain runs to 226 residues: Pyridoxal 5'-phosphate synthase subunit PdxT (226 aa).

60-62 (GES) is a binding site for L-glutamine. Cysteine 92 serves as the catalytic Nucleophile. L-glutamine is bound by residues arginine 121 and 150-151 (IR). Active-site charge relay system residues include histidine 191 and glutamate 193.

It belongs to the glutaminase PdxT/SNO family. As to quaternary structure, in the presence of PdxS, forms a dodecamer of heterodimers. Only shows activity in the heterodimer.

The enzyme catalyses aldehydo-D-ribose 5-phosphate + D-glyceraldehyde 3-phosphate + L-glutamine = pyridoxal 5'-phosphate + L-glutamate + phosphate + 3 H2O + H(+). It carries out the reaction L-glutamine + H2O = L-glutamate + NH4(+). It functions in the pathway cofactor biosynthesis; pyridoxal 5'-phosphate biosynthesis. Catalyzes the hydrolysis of glutamine to glutamate and ammonia as part of the biosynthesis of pyridoxal 5'-phosphate. The resulting ammonia molecule is channeled to the active site of PdxS. The sequence is that of Pyridoxal 5'-phosphate synthase subunit PdxT from Nocardia farcinica (strain IFM 10152).